The sequence spans 397 residues: Probable N-succinyldiaminopimelate aminotransferase DapC (397 aa).

Residues 109 to 110 (GS) and 218 to 222 (DGMAE) each bind pyridoxal 5'-phosphate. N6-(pyridoxal phosphate)lysine is present on K232.

This sequence belongs to the class-III pyridoxal-phosphate-dependent aminotransferase family. As to quaternary structure, homodimer. Pyridoxal 5'-phosphate is required as a cofactor.

The protein localises to the cytoplasm. It carries out the reaction N-succinyl-(2S,6S)-2,6-diaminopimelate + 2-oxoglutarate = (S)-2-succinylamino-6-oxoheptanedioate + L-glutamate. It participates in amino-acid biosynthesis; L-lysine biosynthesis via DAP pathway; LL-2,6-diaminopimelate from (S)-tetrahydrodipicolinate (succinylase route): step 2/3. In terms of biological role, involved in the lysine biosynthetic pathways. It catalyzes the transfer of an amino group from L-glutamate to N-succinyl-2-l-amino-6-oxoheptanedioate (N-succinyl-2-l-amino-6-ketopimelate) in a PLP-dependent reaction, yielding as products N-succinyl-l-2,6-diaminoheptanedioate (N-succinyl-diaminopimelate) and 2-oxoglutarate. The protein is Probable N-succinyldiaminopimelate aminotransferase DapC (dapC) of Mycobacterium tuberculosis (strain CDC 1551 / Oshkosh).